A 1208-amino-acid polypeptide reads, in one-letter code: Lysine-specific demethylase JMJ17 (1208 aa).

The PHD-type 1; degenerate zinc-finger motif lies at 1 to 36 (MLLCDSCNKGWHIYCLSPPLKHIPLGNWYCLECLNT). Positions 4, 7, 30, and 33 each coordinate Zn(2+). The region spanning 126 to 292 (EYCGSPWNLN…YGGSGAELYR (167 aa)) is the JmjC domain. Fe cation contacts are provided by H172, E174, and H260. C369, C372, C383, C385, C392, H395, C400, and C402 together coordinate Zn(2+). The segment at 369-421 (CIICQQFLHLSAIVCNCRPSVFACLEHWKHLCECEPTKLRLEYRYTLAELDMM) adopts a C5HC2 zinc-finger fold. The Nuclear localization signal motif lies at 613 to 620 (SKKISSAK). The segment at 1099-1145 (MLHCICLKPYNSRSMVSCSQCGEWYHTYCLKLHWRPKAYVCSACCPL) adopts a PHD-type 2 zinc-finger fold. Residues C1102, C1104, C1116, C1119, H1124, C1127, C1139, and C1142 each contribute to the Zn(2+) site.

This sequence belongs to the JARID1 histone demethylase family. Fe(2+) serves as cofactor. As to expression, expressed in inflorescences, roots, seedlings and siliques, and, at low levels, in leaves and stems.

Its subcellular location is the nucleus. The enzyme catalyses N(6),N(6),N(6)-trimethyl-L-lysyl(4)-[histone H3] + 2-oxoglutarate + O2 = N(6),N(6)-dimethyl-L-lysyl(4)-[histone H3] + formaldehyde + succinate + CO2. It carries out the reaction N(6),N(6)-dimethyl-L-lysyl(4)-[histone H3] + 2-oxoglutarate + O2 = N(6)-methyl-L-lysyl(4)-[histone H3] + formaldehyde + succinate + CO2. It catalyses the reaction N(6)-methyl-L-lysyl(4)-[histone H3] + 2-oxoglutarate + O2 = L-lysyl(4)-[histone H3] + formaldehyde + succinate + CO2. The catalysed reaction is N(6),N(6),N(6)-trimethyl-L-lysyl(4)-[histone H3] + 3 2-oxoglutarate + 3 O2 = L-lysyl(4)-[histone H3] + 3 formaldehyde + 3 succinate + 3 CO2. Functionally, functions as a histone H3 'Lys-4' (H3K4me) demethylase involved in the regulation of gene expression. Active on H3K4me1, H3K4me2 and H3K4me3. Repressor of the abscisic acid (ABA) signaling pathway, especially during stomatal closure regulation. Negative regulator of responses to dehydration stress by binding directly to the chromatin of SRK2E/OST1 and demethylating H3K4me3 to regulates its expression. Together with JMJ14 and JMJ16, required for plant growth and development. The polypeptide is Lysine-specific demethylase JMJ17 (Arabidopsis thaliana (Mouse-ear cress)).